A 326-amino-acid chain; its full sequence is N-acetyl-gamma-glutamyl-phosphate reductase (326 aa).

Cys-155 is a catalytic residue.

Belongs to the NAGSA dehydrogenase family. Type 1 subfamily.

It localises to the cytoplasm. The enzyme catalyses N-acetyl-L-glutamate 5-semialdehyde + phosphate + NADP(+) = N-acetyl-L-glutamyl 5-phosphate + NADPH + H(+). It participates in amino-acid biosynthesis; L-arginine biosynthesis; N(2)-acetyl-L-ornithine from L-glutamate: step 3/4. Functionally, catalyzes the NADPH-dependent reduction of N-acetyl-5-glutamyl phosphate to yield N-acetyl-L-glutamate 5-semialdehyde. This Shewanella loihica (strain ATCC BAA-1088 / PV-4) protein is N-acetyl-gamma-glutamyl-phosphate reductase.